We begin with the raw amino-acid sequence, 179 residues long: ATP synthase subunit delta (179 aa).

This sequence belongs to the ATPase delta chain family. As to quaternary structure, F-type ATPases have 2 components, F(1) - the catalytic core - and F(0) - the membrane proton channel. F(1) has five subunits: alpha(3), beta(3), gamma(1), delta(1), epsilon(1). F(0) has three main subunits: a(1), b(2) and c(10-14). The alpha and beta chains form an alternating ring which encloses part of the gamma chain. F(1) is attached to F(0) by a central stalk formed by the gamma and epsilon chains, while a peripheral stalk is formed by the delta and b chains.

It is found in the cell inner membrane. F(1)F(0) ATP synthase produces ATP from ADP in the presence of a proton or sodium gradient. F-type ATPases consist of two structural domains, F(1) containing the extramembraneous catalytic core and F(0) containing the membrane proton channel, linked together by a central stalk and a peripheral stalk. During catalysis, ATP synthesis in the catalytic domain of F(1) is coupled via a rotary mechanism of the central stalk subunits to proton translocation. In terms of biological role, this protein is part of the stalk that links CF(0) to CF(1). It either transmits conformational changes from CF(0) to CF(1) or is implicated in proton conduction. This is ATP synthase subunit delta from Acidithiobacillus ferridurans.